The following is an 86-amino-acid chain: Putative defensin-like protein 211 (86 aa).

The N-terminal stretch at 1–19 (MNTIVLFLTLLILVSSCTS) is a signal peptide. Cystine bridges form between cysteine 55/cysteine 72, cysteine 58/cysteine 77, and cysteine 62/cysteine 79.

It belongs to the DEFL family.

The protein resides in the secreted. This is Putative defensin-like protein 211 from Arabidopsis thaliana (Mouse-ear cress).